The chain runs to 380 residues: Succinyl-diaminopimelate desuccinylase (380 aa).

Residue His69 participates in Zn(2+) binding. Asp71 is a catalytic residue. Asp102 contributes to the Zn(2+) binding site. Glu135 (proton acceptor) is an active-site residue. Glu136, Glu164, and His353 together coordinate Zn(2+).

This sequence belongs to the peptidase M20A family. DapE subfamily. In terms of assembly, homodimer. It depends on Zn(2+) as a cofactor. Co(2+) is required as a cofactor.

The catalysed reaction is N-succinyl-(2S,6S)-2,6-diaminopimelate + H2O = (2S,6S)-2,6-diaminopimelate + succinate. Its pathway is amino-acid biosynthesis; L-lysine biosynthesis via DAP pathway; LL-2,6-diaminopimelate from (S)-tetrahydrodipicolinate (succinylase route): step 3/3. Its function is as follows. Catalyzes the hydrolysis of N-succinyl-L,L-diaminopimelic acid (SDAP), forming succinate and LL-2,6-diaminopimelate (DAP), an intermediate involved in the bacterial biosynthesis of lysine and meso-diaminopimelic acid, an essential component of bacterial cell walls. The sequence is that of Succinyl-diaminopimelate desuccinylase from Cereibacter sphaeroides (strain KD131 / KCTC 12085) (Rhodobacter sphaeroides).